The following is a 123-amino-acid chain: Small ribosomal subunit protein uS12c (123 aa).

Positions 103-123 (AAGVKNRKQSRSKYGAKKPKE) are disordered. Basic residues predominate over residues 107-123 (KNRKQSRSKYGAKKPKE).

This sequence belongs to the universal ribosomal protein uS12 family. As to quaternary structure, part of the 30S ribosomal subunit.

Its subcellular location is the plastid. The protein localises to the chloroplast. In terms of biological role, with S4 and S5 plays an important role in translational accuracy. Located at the interface of the 30S and 50S subunits. The polypeptide is Small ribosomal subunit protein uS12c (rps12) (Guillardia theta (Cryptophyte)).